The primary structure comprises 103 residues: Large ribosomal subunit protein bL21 (103 aa).

Belongs to the bacterial ribosomal protein bL21 family. In terms of assembly, part of the 50S ribosomal subunit. Contacts protein L20.

Functionally, this protein binds to 23S rRNA in the presence of protein L20. This Shewanella denitrificans (strain OS217 / ATCC BAA-1090 / DSM 15013) protein is Large ribosomal subunit protein bL21.